Here is a 414-residue protein sequence, read N- to C-terminus: Seminal vesicle secretory protein 2 (414 aa).

Positions 1–22 are cleaved as a signal peptide; the sequence is MKSSVFILSLFLLLERQAAVVG. Glutamine 23 is modified (pyrrolidone carboxylic acid). 13 repeat units span residues 108-120, 127-139, 140-152, 153-165, 166-178, 179-191, 192-204, 205-217, 224-236, 237-249, 257-269, 275-287, and 299-311. A 13 X 13 AA tandem repeats region spans residues 108–311; the sequence is ESQIKSFRQV…LKSFGQQKSL (204 aa). 3 disordered regions span residues 170-228, 240-294, and 306-369; these read KSYG…GQMK, AKSF…SFSQ, and GQQK…FGQE. A compositionally biased stretch (polar residues) spans 240 to 259; the sequence is AKSFGQVKSQSGQMKSSYGQ. Residues 277–294 are compositionally biased toward low complexity; that stretch reads QLKSYGQQKSQKQSSFSQ. Composition is skewed to polar residues over residues 306–321 and 342–351; these read GQQK…TQQK and SVQQKSTQQM. Residues 358-369 show a composition bias toward low complexity; the sequence is SQFGQQRQFGQE.

Post-translationally, the repeating unit appears to be involved in the formation of the copulatory plug via a transglutaminase reaction cross-linking glutamine and lysine residues.

In terms of biological role, the rat seminal vesicle contains six major androgen-dependent secretory proteins referred to as SVS I-VI. The SVS I-III proteins appear to be components of the rat copulatory plug, with the SVS II protein being the major component. This is Seminal vesicle secretory protein 2 (Svs2) from Rattus norvegicus (Rat).